Consider the following 110-residue polypeptide: UPF0132 membrane protein MJ1443 (110 aa).

3 helical membrane passes run 15 to 35 (IEGALCYLFGVITGILFYILE), 49 to 69 (IILFGGLWVLSIILAFIPYGW), and 70 to 90 (MLSGLVNLAAFILWIVCMYKA).

Belongs to the UPF0132 family.

It is found in the cell membrane. The chain is UPF0132 membrane protein MJ1443 from Methanocaldococcus jannaschii (strain ATCC 43067 / DSM 2661 / JAL-1 / JCM 10045 / NBRC 100440) (Methanococcus jannaschii).